The primary structure comprises 101 residues: Protein S100-A4 (101 aa).

N-acetylalanine is present on alanine 2. 2 consecutive EF-hand domains span residues 12–47 and 50–85; these read IVSTFHKYSGNEGDKFKLNKTELKELLTRELPSFLG and TDEAAFQKLMNNLDSNRDNEVDFQEYCVFLSCIAMM. The Ca(2+) site is built by lysine 28 and glutamate 33. Lysine 35 is subject to N6-acetyllysine. Positions 63, 65, 67, 69, and 74 each coordinate Ca(2+).

The protein belongs to the S-100 family. As to quaternary structure, homodimer. Interacts with PPFIBP1 in a calcium-dependent mode. Interacts with PGLYRP1; this complex acts as a chemoattractant that promotes lymphocyte movement. Interacts with MYH9; this interaction increases cell motility. Interacts with Annexin 2/ANXA2. Interacts with TP53; this interaction promotes TP53 degradation. Interacts with CCR5 and CXCR3. Interacts with FCGR3A; this interaction inhibits PKC-dependent phosphorylation of FCGR3A.

It localises to the secreted. It is found in the nucleus. The protein resides in the cytoplasm. Its function is as follows. Calcium-binding protein that plays a role in various cellular processes including motility, angiogenesis, cell differentiation, apoptosis, and autophagy. Increases cell motility and invasiveness by interacting with non-muscle myosin heavy chain (NMMHC) IIA/MYH9. Mechanistically, promotes filament depolymerization and increases the amount of soluble myosin-IIA, resulting in the formation of stable protrusions facilitating chemotaxis. Also modulates the pro-apoptotic function of TP53 by binding to its C-terminal transactivation domain within the nucleus and reducing its protein levels. Within the extracellular space, stimulates cytokine production including granulocyte colony-stimulating factor and CCL24 from T-lymphocytes. In addition, stimulates T-lymphocyte chemotaxis by acting as a chemoattractant complex with PGLYRP1 that promotes lymphocyte migration via CCR5 and CXCR3 receptors. The polypeptide is Protein S100-A4 (S100a4) (Rattus norvegicus (Rat)).